Consider the following 26-residue polypeptide: Small toxic protein ShoB (26 aa).

The chain crosses the membrane as a helical span at residues 7–24 (LIKRVIKIIIAVLQLILL).

It is found in the membrane. Its function is as follows. Toxic component of a type I toxin-antitoxin (TA) system. May be a toxic protein; overexpression causes cessation of growth and rapid membrane depolarization. Overexpression induces stress-response and a number of membrane protein genes. The polypeptide is Small toxic protein ShoB (shoB) (Escherichia coli (strain K12)).